Reading from the N-terminus, the 573-residue chain is Phosphoenolpyruvate-protein phosphotransferase (573 aa).

His190 (tele-phosphohistidine intermediate) is an active-site residue. Positions 297 and 333 each coordinate substrate. Mg(2+)-binding residues include Glu432 and Asp456. 455-456 contacts phosphoenolpyruvate; the sequence is ND. Position 466 (Arg466) interacts with substrate. Cys503 serves as the catalytic Proton donor.

It belongs to the PEP-utilizing enzyme family. In terms of assembly, homodimer. Requires Mg(2+) as cofactor.

Its subcellular location is the cytoplasm. The catalysed reaction is L-histidyl-[protein] + phosphoenolpyruvate = N(pros)-phospho-L-histidyl-[protein] + pyruvate. Functionally, general (non sugar-specific) component of the phosphoenolpyruvate-dependent sugar phosphotransferase system (sugar PTS). This major carbohydrate active-transport system catalyzes the phosphorylation of incoming sugar substrates concomitantly with their translocation across the cell membrane. Enzyme I transfers the phosphoryl group from phosphoenolpyruvate (PEP) to the phosphoryl carrier protein (HPr). The protein is Phosphoenolpyruvate-protein phosphotransferase (ptsI) of Staphylococcus carnosus (strain TM300).